The primary structure comprises 467 residues: tRNA-2-methylthio-N(6)-dimethylallyladenosine synthase (467 aa).

The disordered stretch occupies residues M1–A20. An MTTase N-terminal domain is found at R23–G143. Positions 32, 68, 106, 184, 188, and 191 each coordinate [4Fe-4S] cluster. Positions R170 to A402 constitute a Radical SAM core domain. The TRAM domain occupies D405–A467.

Belongs to the methylthiotransferase family. MiaB subfamily. Monomer. [4Fe-4S] cluster serves as cofactor.

The protein localises to the cytoplasm. The catalysed reaction is N(6)-dimethylallyladenosine(37) in tRNA + (sulfur carrier)-SH + AH2 + 2 S-adenosyl-L-methionine = 2-methylsulfanyl-N(6)-dimethylallyladenosine(37) in tRNA + (sulfur carrier)-H + 5'-deoxyadenosine + L-methionine + A + S-adenosyl-L-homocysteine + 2 H(+). In terms of biological role, catalyzes the methylthiolation of N6-(dimethylallyl)adenosine (i(6)A), leading to the formation of 2-methylthio-N6-(dimethylallyl)adenosine (ms(2)i(6)A) at position 37 in tRNAs that read codons beginning with uridine. The chain is tRNA-2-methylthio-N(6)-dimethylallyladenosine synthase from Brucella canis (strain ATCC 23365 / NCTC 10854 / RM-666).